A 348-amino-acid chain; its full sequence is Lysophosphatidic acid receptor 2 (348 aa).

At 1–30 the chain is on the extracellular side; sequence MGHCYYNETIGFFYNNSGKELSSHWRPKDV. N-linked (GlcNAc...) asparagine glycans are attached at residues asparagine 7 and asparagine 15. The chain crosses the membrane as a helical span at residues 31 to 51; the sequence is VVVALGLTVSVLVLLTNLLVI. The Cytoplasmic portion of the chain corresponds to 52-66; sequence AAIASNRRFHQPIYY. A helical transmembrane segment spans residues 67–87; that stretch reads LLGNLAAADLFAGVAYLFLMF. The Extracellular portion of the chain corresponds to 88–104; the sequence is HTGPRTARLSLEGWFLR. Residues 105–124 traverse the membrane as a helical segment; that stretch reads QGLLDTSLTASVATLLAIAV. Residues 125-143 lie on the Cytoplasmic side of the membrane; the sequence is ERRRSVMAVQLHSRLPRGR. The helical transmembrane segment at 144 to 164 threads the bilayer; sequence VVMLIVGVWVAALGLGLLPAH. Over 165–185 the chain is Extracellular; sequence SWHCLCALDRCSRMAPLLSRS. A helical membrane pass occupies residues 186 to 206; sequence YLAVWALSSLLVFLLMVAVYT. At 207-239 the chain is on the cytoplasmic side; that stretch reads RIFFYVRRRVQRMAEHVSCHPRYRETTLSLVKT. A helical transmembrane segment spans residues 240–260; the sequence is VVIILGAFVVCWTPGQVVLLL. At 261–276 the chain is on the extracellular side; sequence DGLGCKSCNVLAVEKY. A helical membrane pass occupies residues 277 to 294; sequence FLLLAEANSLVNAAVYSC. At 295–348 the chain is on the cytoplasmic side; that stretch reads RDAEMRRTFRRLLCCACLRRSTRESAHYTSSAQGGASTRIMLPENGHPLMDSTL. A lipid anchor (S-palmitoyl cysteine) is attached at cysteine 308. The short motif at 345 to 348 is the PDZ-binding element; the sequence is DSTL.

This sequence belongs to the G-protein coupled receptor 1 family. Interacts with SLC9A3R2/NHERF2, MAGI3 and PLCB3. Interacts with RALA and GRK2.

The protein resides in the cell surface. The protein localises to the cell membrane. Its function is as follows. Receptor for lysophosphatidic acid (LPA), a mediator of diverse cellular activities. Seems to be coupled to the G(i)/G(o), G(12)/G(13), and G(q) families of heteromeric G proteins. Plays a key role in phospholipase C-beta (PLC-beta) signaling pathway. Stimulates phospholipase C (PLC) activity in a manner that is independent of RALA activation. This chain is Lysophosphatidic acid receptor 2, found in Macaca fascicularis (Crab-eating macaque).